A 544-amino-acid polypeptide reads, in one-letter code: DNA mismatch repair protein MutL (544 aa).

Belongs to the DNA mismatch repair MutL/HexB family.

Functionally, this protein is involved in the repair of mismatches in DNA. It is required for dam-dependent methyl-directed DNA mismatch repair. May act as a 'molecular matchmaker', a protein that promotes the formation of a stable complex between two or more DNA-binding proteins in an ATP-dependent manner without itself being part of a final effector complex. The polypeptide is DNA mismatch repair protein MutL (Thermodesulfovibrio yellowstonii (strain ATCC 51303 / DSM 11347 / YP87)).